Reading from the N-terminus, the 1050-residue chain is Atrial natriuretic peptide receptor 2 (1050 aa).

The first 19 residues, 1–19 (MDLGHSLFVVFTCFLMARC), serve as a signal peptide directing secretion. The Extracellular portion of the chain corresponds to 20–460 (RTEIGKNITV…FCNEDQLPVL (441 aa)). 2 N-linked (GlcNAc...) asparagine glycosylation sites follow: N26 and N74. A disulfide bond links C84 and C110. N-linked (GlcNAc...) asparagine glycans are attached at residues N169, N203, N285, N352, N366, and N415. The cysteines at positions 236 and 339 are disulfide-linked. The helical transmembrane segment at 461–481 (GIVAVGSGLALIIFGISSFLI) threads the bilayer. Residues 482 to 1050 (YRKLKLEKEL…LGEKTDVYVI (569 aa)) lie on the Cytoplasmic side of the membrane. Residues 517-790 (SRLTISQRGS…PDFSYIKIFV (274 aa)) form the Protein kinase domain. Residues 865 to 995 (TIYFSDIVGF…DTVNTASRME (131 aa)) enclose the Guanylate cyclase domain.

This sequence belongs to the adenylyl cyclase class-4/guanylyl cyclase family. Phosphorylated. Phosphorylation of the protein kinase-like domain is required for full activation by CNP. In terms of processing, glycosylated. As to expression, high levels found in liver, atrium and gill. Moderate levels found in brain and ventricle, and low levels in esophageal sphincter, stomach, posterior intestine and kidney.

The protein resides in the cell membrane. The enzyme catalyses GTP = 3',5'-cyclic GMP + diphosphate. Its function is as follows. Receptor for the C-type natriuretic peptide NPPC/CNP hormone. Has guanylate cyclase activity upon binding of its ligand. May play a role in the regulation of skeletal growth. This chain is Atrial natriuretic peptide receptor 2 (npr2), found in Anguilla japonica (Japanese eel).